We begin with the raw amino-acid sequence, 466 residues long: MSNGNIVQCIGPVVDIQFPRDKMPNIYDALTLVDGGEKSFSEKGLTFEVQQQIGDGVVRAIAMGASDGLRRGMEVKSTGKPISVPVGPATLGRIMDVLGRPIDDAGPIATEERRAIHQPAPKFDELSPSVDLLETGIKVIDLVCPFAKGGKVGLFGGAGVGKTVNMMELINNIAKQHSGLSVFAGVGERTREGNDFYHEMKESNVIDKVAMVFGQMNEPPGNRLRVALTGLTMAEAFRDEGRDILFFVDNIYRYTLAGTEVSALLGRMPSAVGYQPTLAEEMGKLQERITSTKTGSVTSIQAVYVPADDLTDPSPATTFLHLDSTVVLSRDIAALGIYPAVDPLDSTSRQLDPQVVGQEHYEVARDVQMTLQRYKELRDIIAILGMDELSPEDKLAVSRARKIQRFLSQPFHVAEVFTGSPGKYVPLKETIRGFKMICSGELDHLPEQAFYMVGSIDEAIEKAKKL.

An ATP-binding site is contributed by 156 to 163 (GGAGVGKT).

This sequence belongs to the ATPase alpha/beta chains family. As to quaternary structure, F-type ATPases have 2 components, CF(1) - the catalytic core - and CF(0) - the membrane proton channel. CF(1) has five subunits: alpha(3), beta(3), gamma(1), delta(1), epsilon(1). CF(0) has three main subunits: a(1), b(2) and c(9-12). The alpha and beta chains form an alternating ring which encloses part of the gamma chain. CF(1) is attached to CF(0) by a central stalk formed by the gamma and epsilon chains, while a peripheral stalk is formed by the delta and b chains.

It localises to the cell inner membrane. It carries out the reaction ATP + H2O + 4 H(+)(in) = ADP + phosphate + 5 H(+)(out). Its function is as follows. Produces ATP from ADP in the presence of a proton gradient across the membrane. The catalytic sites are hosted primarily by the beta subunits. The sequence is that of ATP synthase subunit beta from Polynucleobacter necessarius subsp. necessarius (strain STIR1).